Here is a 1005-residue protein sequence, read N- to C-terminus: PH and SEC7 domain-containing protein 4 (1005 aa).

The disordered stretch occupies residues 27–66 (YPSEIHGHPGPSEPCQEHTCPFDPPESARPDAPHGNSGVE). Phosphoserine is present on residues S85, S88, and S97. Disordered stretches follow at residues 145–189 (PSKD…PGSS), 287–386 (LALG…NRGE), 407–525 (TSLL…SSSR), and 694–714 (EEDA…KISS). Residues 161–177 (EEDEDSGDDSSGPEEEN) show a composition bias toward acidic residues. The span at 350–361 (SQTSQSLSDLTQ) shows a compositional bias: low complexity. Phosphoserine occurs at positions 381 and 435. Over residues 428–438 (PVSSQDSSPRV) the composition is skewed to low complexity. 2 stretches are compositionally biased toward basic and acidic residues: residues 453-465 (LQKD…SLKE) and 476-488 (QEAE…RSED). Positions 493–686 (QHHVHLASAE…KALYWSIRSE (194 aa)) constitute an SEC7 domain. Positions 726 to 841 (PTYKQGILAR…WIARINLAAA (116 aa)) constitute a PH domain. Positions 870 to 926 (SSLEEQHRSHENCLDAASDDLLDLQRNLPERRGRSRELEEYRLRKEYLEHEKTRYET) form a coiled coil. Positions 951–1005 (KETDGSQEPRPSLKKSHSSPSLHQEEAPTTAKVKRNISERRTYRKIIPKRNRNQL) are disordered. Phosphoserine occurs at positions 968 and 971. Residues 992-1005 (TYRKIIPKRNRNQL) show a composition bias toward basic residues.

The protein resides in the cell membrane. It localises to the cell projection. It is found in the ruffle membrane. Functionally, guanine nucleotide exchange factor for ARF6 and ARL14/ARF7. Through ARL14 activation, controls the movement of MHC class II-containing vesicles along the actin cytoskeleton in dendritic cells. Involved in membrane recycling. Interacts with several phosphatidylinositol phosphate species, including phosphatidylinositol 3,4-bisphosphate, phosphatidylinositol 3,5-bisphosphate and phosphatidylinositol 4,5-bisphosphate. This is PH and SEC7 domain-containing protein 4 (Psd4) from Mus musculus (Mouse).